The following is a 2016-amino-acid chain: Cell adhesion molecule Dscam1 (2016 aa).

A signal peptide spans Met-1–Ala-28. Over Ala-29–Asn-1618 the chain is Extracellular. 9 consecutive Ig-like C2-type domains span residues Pro-39–Arg-134, Ala-138–Ser-230, Pro-247–Thr-338, Pro-342–Lys-421, Pro-428–Asn-522, Pro-527–Gln-613, Pro-618–Asn-712, Pro-715–Ser-807, and Pro-812–Asn-904. Asn-53 is a glycosylation site (N-linked (GlcNAc...) asparagine). A disulfide bond links Cys-61 and Cys-117. Asp-144, Asn-146, and Leu-161 together coordinate Zn(2+). 13 cysteine pairs are disulfide-bonded: Cys-160/Cys-217, Cys-160/Thr-219, Cys-160/Lys-220, Cys-269/Cys-322, Pro-270/Val-323, Ala-276/Gly-329, Cys-364/Cys-405, Cys-450/Cys-506, Cys-547/Cys-596, Cys-640/Cys-694, Val-641/Cys-694, Val-641/Ile-695, and Cys-736/Cys-790. An N-linked (GlcNAc...) asparagine glycan is attached at Asn-325. N-linked (GlcNAc...) asparagine glycosylation is found at Asn-492 and Asn-577. Residue Asn-820 is glycosylated (N-linked (GlcNAc...) asparagine). The cysteines at positions 833 and 890 are disulfide-linked. Fibronectin type-III domains lie at Met-913 to Glu-1007, Lys-1012 to Gln-1116, Pro-1117 to Asp-1213, and Ala-1217 to Gln-1310. 3 N-linked (GlcNAc...) asparagine glycosylation sites follow: Asn-1022, Asn-1055, and Asn-1186. In terms of domain architecture, Ig-like C2-type 10 spans Pro-1312–Thr-1394. A disulfide bond links Cys-1334 and Cys-1382. Fibronectin type-III domains are found at residues Pro-1402 to Gln-1495 and Leu-1499 to Thr-1594. The helical transmembrane segment at Leu-1619–Ile-1639 threads the bilayer. Over Leu-1640–Val-2016 the chain is Cytoplasmic. Residues Pro-1685 to Pro-1688 carry the PXXP motif 1; SH3-binding motif. Residues Pro-1688 to Asn-1719 form a disordered region. The short motif at Pro-1727–Pro-1730 is the PXXP motif 2; SH3-binding element. 2 disordered regions span residues Gly-1787–Ala-1846 and Ser-1862–Val-2016. A compositionally biased stretch (polar residues) spans Lys-1826 to Tyr-1836. The short motif at Tyr-1842–Pro-1845 is the YXXP motif 1; potential SH2-binding element. The short motif at Tyr-1875–Pro-1878 is the YXXP motif 2; potential SH2-binding element. Low complexity predominate over residues Gly-1897–Arg-1918. The short motif at Pro-1925–Pro-1932 is the Polyproline tract (probable SH3-binding) element. 2 stretches are compositionally biased toward basic and acidic residues: residues Asp-1944–Pro-1962 and Gln-1974–Thr-1993. Positions Gly-1994–Asn-2004 are enriched in polar residues.

As to quaternary structure, homodimer (via extracellular region); alternative splicing produces a potential 19,008 different ectodomains and the majority of these show strong isoform-specific homodimerization. Interacts (via cytoplasmic domain) with dock/dreadlocks (via SH2 and SH3 domains); the interaction is direct and may require Dscam1 to be phosphorylated. Phosphorylated on tyrosine residues in the intracellular domain. Tyrosine protein kinase Src42A and possibly Src64B are involved in this phosphorylation. Post-translationally, glycosylation on Asn-53 and Asn-325 is involved in stabilizing dimerization. In terms of processing, proteolytically processed, probably to generate a secreted form. Secreted into the hemolymph (at protein level). Expressed in brain and eye-antennal imaginal disks, including R3/R4 and R7 photoreceptor cells. Individual R3/R4 cells express between 14 and 50 randomly generated mRNAs encoding distinct isoforms.

It localises to the cell membrane. The protein localises to the cell projection. Its subcellular location is the neuron projection. It is found in the axon. The protein resides in the perikaryon. It localises to the dendrite. The protein localises to the secreted. Cell surface receptor involved in guidance and targeting of growing nerve axons. Required during Bolwig's organ differentiation for accurate and efficient targeting of photoreceptor neuron axons to their synaptic targets in the brain via the P2 intermediate target neuron. Involved in isoneural self-avoidance during dendrite arborization but not in heteroneural recognition and repulsion during tiling by related neurons of the same class. Involved in regulating axon bifurcation and divergent extension in the developing mushroom body. Essential for axon arborisation in ellipsoid body. Exhibits an extraordinary level of molecular diversity resulting from alternative splicing. Isoforms differing in their ectodomain makeup show a high degree of functional redundancy while isoforms with different transmembrane domains are involved in different neuronal morphogenetic processes and are differentially targeted to dendrites or axons. The vast majority of isoforms exhibit strong isoform-specific homophilic binding. Individual cells express a distinct randomly generated repertoire of isoforms. Cell surfaces bearing identical repertoires of Dscam1 isoforms, such as those from the same cell, trigger recognition and avoidance. A subset of isoforms is expressed in fat body cells and hemocytes, cells that are part of the insect immune response, and these isoforms are secreted into the hemolymph. The secreted form comprising the ectodomain can bind to bacteria, such as Escherichia coli, and may act as an opsonin enhancing their phagocytosis by hemocytes. This Drosophila melanogaster (Fruit fly) protein is Cell adhesion molecule Dscam1.